Consider the following 235-residue polypeptide: Geranylgeranylglyceryl phosphate synthase (235 aa).

Position 13 (Lys13) interacts with sn-glycerol 1-phosphate. 2 residues coordinate Mg(2+): Asp15 and Thr42. Residues 162–167, Gly192, and 212–213 contribute to the sn-glycerol 1-phosphate site; these read YVEYSG and GD.

It belongs to the GGGP/HepGP synthase family. Group I subfamily. Mg(2+) is required as a cofactor.

It localises to the cytoplasm. The enzyme catalyses sn-glycerol 1-phosphate + (2E,6E,10E)-geranylgeranyl diphosphate = sn-3-O-(geranylgeranyl)glycerol 1-phosphate + diphosphate. It functions in the pathway membrane lipid metabolism; glycerophospholipid metabolism. Its function is as follows. Prenyltransferase that catalyzes the transfer of the geranylgeranyl moiety of geranylgeranyl diphosphate (GGPP) to the C3 hydroxyl of sn-glycerol-1-phosphate (G1P). This reaction is the first ether-bond-formation step in the biosynthesis of archaeal membrane lipids. The polypeptide is Geranylgeranylglyceryl phosphate synthase (Natronomonas pharaonis (strain ATCC 35678 / DSM 2160 / CIP 103997 / JCM 8858 / NBRC 14720 / NCIMB 2260 / Gabara) (Halobacterium pharaonis)).